Reading from the N-terminus, the 113-residue chain is U11-theraphotoxin-Hhn1a (113 aa).

Residues 1–21 (MNTVRVTFLLVFVLAVSLGQA) form the signal peptide. Residues 22-74 (DKDENRMEVQEKTEQGKSYLDFAENLLLQKLEELEAKLLEEDSEESRNSRQKR) constitute a propeptide that is removed on maturation. Positions 61-83 (EEDSEESRNSRQKRCIGEGVPCD) are disordered. 3 disulfide bridges follow: cysteine 75–cysteine 90, cysteine 82–cysteine 95, and cysteine 89–cysteine 110.

It belongs to the neurotoxin 14 (magi-1) family. 01 (HNTX-16) subfamily. As to expression, expressed by the venom gland.

Its subcellular location is the secreted. Its function is as follows. Probable ion channel inhibitor. The chain is U11-theraphotoxin-Hhn1a from Cyriopagopus hainanus (Chinese bird spider).